A 262-amino-acid chain; its full sequence is Hydroxyethylthiazole kinase (262 aa).

Methionine 43 lines the substrate pocket. 2 residues coordinate ATP: arginine 118 and threonine 164. Alanine 191 contacts substrate.

It belongs to the Thz kinase family. Mg(2+) is required as a cofactor.

It catalyses the reaction 5-(2-hydroxyethyl)-4-methylthiazole + ATP = 4-methyl-5-(2-phosphooxyethyl)-thiazole + ADP + H(+). It functions in the pathway cofactor biosynthesis; thiamine diphosphate biosynthesis; 4-methyl-5-(2-phosphoethyl)-thiazole from 5-(2-hydroxyethyl)-4-methylthiazole: step 1/1. Catalyzes the phosphorylation of the hydroxyl group of 4-methyl-5-beta-hydroxyethylthiazole (THZ). In Cereibacter sphaeroides (strain KD131 / KCTC 12085) (Rhodobacter sphaeroides), this protein is Hydroxyethylthiazole kinase.